The primary structure comprises 335 residues: Putative D-threonate 4-phosphate dehydrogenase (335 aa).

Substrate contacts are provided by H140 and T141. A divalent metal cation-binding residues include H170, H214, and H269. 2 residues coordinate substrate: K277 and R295.

This sequence belongs to the PdxA family. PdxA2 subfamily. As to quaternary structure, homodimer. A divalent metal cation serves as cofactor.

The enzyme catalyses 4-O-phospho-D-threonate + NAD(+) = dihydroxyacetone phosphate + CO2 + NADH. Its function is as follows. Catalyzes the NAD-dependent oxidation and subsequent decarboxylation of D-threonate 4-phosphate to produce dihydroxyacetone phosphate (DHAP). This Symbiobacterium thermophilum (strain DSM 24528 / JCM 14929 / IAM 14863 / T) protein is Putative D-threonate 4-phosphate dehydrogenase.